Consider the following 370-residue polypeptide: Quinolinate synthase (370 aa).

The iminosuccinate site is built by H62 and S83. A [4Fe-4S] cluster-binding site is contributed by C128. Residues 154 to 156 and S171 each bind iminosuccinate; that span reads YAN. C215 contacts [4Fe-4S] cluster. Residues 241–243 and T258 contribute to the iminosuccinate site; that span reads HPE. Residue C312 participates in [4Fe-4S] cluster binding.

Belongs to the quinolinate synthase family. Type 1 subfamily. [4Fe-4S] cluster is required as a cofactor.

It is found in the cytoplasm. It carries out the reaction iminosuccinate + dihydroxyacetone phosphate = quinolinate + phosphate + 2 H2O + H(+). Its pathway is cofactor biosynthesis; NAD(+) biosynthesis; quinolinate from iminoaspartate: step 1/1. Functionally, catalyzes the condensation of iminoaspartate with dihydroxyacetone phosphate to form quinolinate. The chain is Quinolinate synthase from Neisseria meningitidis serogroup C (strain 053442).